Reading from the N-terminus, the 417-residue chain is Queuine tRNA-ribosyltransferase accessory subunit 2 (417 aa).

C324, C326, C329, and H355 together coordinate Zn(2+).

It belongs to the queuine tRNA-ribosyltransferase family. QTRT2 subfamily. In terms of assembly, heterodimer of a catalytic subunit and an accessory subunit. Requires Zn(2+) as cofactor.

The protein resides in the cytoplasm. In terms of biological role, non-catalytic subunit of the queuine tRNA-ribosyltransferase (TGT) that catalyzes the base-exchange of a guanine (G) residue with queuine (Q) at position 34 (anticodon wobble position) in tRNAs with GU(N) anticodons (tRNA-Asp, -Asn, -His and -Tyr), resulting in the hypermodified nucleoside queuosine (7-(((4,5-cis-dihydroxy-2-cyclopenten-1-yl)amino)methyl)-7-deazaguanosine). This Drosophila virilis (Fruit fly) protein is Queuine tRNA-ribosyltransferase accessory subunit 2.